Consider the following 178-residue polypeptide: Large ribosomal subunit protein uL5 (178 aa).

Belongs to the universal ribosomal protein uL5 family. In terms of assembly, part of the 50S ribosomal subunit; part of the 5S rRNA/L5/L18/L25 subcomplex. Contacts the 5S rRNA and the P site tRNA. Forms a bridge to the 30S subunit in the 70S ribosome.

In terms of biological role, this is one of the proteins that bind and probably mediate the attachment of the 5S RNA into the large ribosomal subunit, where it forms part of the central protuberance. In the 70S ribosome it contacts protein S13 of the 30S subunit (bridge B1b), connecting the 2 subunits; this bridge is implicated in subunit movement. Contacts the P site tRNA; the 5S rRNA and some of its associated proteins might help stabilize positioning of ribosome-bound tRNAs. This chain is Large ribosomal subunit protein uL5, found in Prochlorococcus marinus subsp. pastoris (strain CCMP1986 / NIES-2087 / MED4).